The following is a 226-amino-acid chain: Probable chemoreceptor glutamine deamidase CheD (226 aa).

This sequence belongs to the CheD family.

It carries out the reaction L-glutaminyl-[protein] + H2O = L-glutamyl-[protein] + NH4(+). Probably deamidates glutamine residues to glutamate on methyl-accepting chemotaxis receptors (MCPs), playing an important role in chemotaxis. The chain is Probable chemoreceptor glutamine deamidase CheD from Bordetella avium (strain 197N).